We begin with the raw amino-acid sequence, 162 residues long: UPF0260 protein CC_3276 (162 aa).

This sequence belongs to the UPF0260 family.

This is UPF0260 protein CC_3276 from Caulobacter vibrioides (strain ATCC 19089 / CIP 103742 / CB 15) (Caulobacter crescentus).